A 264-amino-acid polypeptide reads, in one-letter code: MEGKVYIGGEDYEKEFTPKDYLTTYYSFHSGPVAEQEIVKFSLQNLYQTFSTGGVGGDVLIDIGSGPTIYQLLSACEVFREIIVTDYTPQNLQELQKWLKKEPGAYDWSSIVQHACELEGDRSRWQEKEAKLRRTVTRVLRCDVTKTPPLGSAQVPLADCVLTFLAMECACPDIDTYRAALRRLAGLLKPGGHLVTLVTLRFQHYMVGPKKFSGVYLEKEVVEKAIQDAGCQVLKCNCVSLSYSEAYCSHDGLCFVVARKGPSA.

Lysine 14 is modified (N6-succinyllysine). S-adenosyl-L-methionine contacts are provided by residues tyrosine 21, tyrosine 26, 64-65, tyrosine 70, aspartate 86, and asparagine 91; that span reads GS. At lysine 97 the chain carries N6-succinyllysine. S-adenosyl-L-methionine contacts are provided by residues 143–144 and phenylalanine 164; that span reads DV.

This sequence belongs to the class I-like SAM-binding methyltransferase superfamily. NNMT/PNMT/TEMT family. As to quaternary structure, monomer. In terms of tissue distribution, detected in lung and liver (at protein level).

Its subcellular location is the cytoplasm. It carries out the reaction a tertiary amine + S-adenosyl-L-methionine = a methylated tertiary amine + S-adenosyl-L-homocysteine + H(+). The enzyme catalyses a secondary amine + S-adenosyl-L-methionine = a methylated secondary amine + S-adenosyl-L-homocysteine + H(+). The catalysed reaction is a primary amine + S-adenosyl-L-methionine = a methylated primary amine + S-adenosyl-L-homocysteine + H(+). It catalyses the reaction dimethyl sulfide + S-adenosyl-L-methionine = trimethylsulfonium + S-adenosyl-L-homocysteine. With respect to regulation, inhibited by the S-adenosyl-L-methionine analog sinefungin and by the product S-adenosyl-L-homocysteine. In terms of biological role, catalyzes the N-methylation of tryptamine and structurally related compounds. Functions as a thioether S-methyltransferase and is active with a variety of thioethers and the corresponding selenium and tellurium compounds, including 3-methylthiopropionaldehyde, dimethyl selenide, dimethyl telluride, 2-methylthioethylamine, 2-methylthioethanol, methyl-n-propyl sulfide and diethyl sulfide. Plays an important role in the detoxification of selenium compounds. In Mus musculus (Mouse), this protein is Indolethylamine N-methyltransferase (Inmt).